The following is a 486-amino-acid chain: Probable glycine dehydrogenase (decarboxylating) subunit 2 (486 aa).

The residue at position 269 (lysine 269) is an N6-(pyridoxal phosphate)lysine.

This sequence belongs to the GcvP family. C-terminal subunit subfamily. The glycine cleavage system is composed of four proteins: P, T, L and H. In this organism, the P 'protein' is a heterodimer of two subunits. Pyridoxal 5'-phosphate serves as cofactor.

The enzyme catalyses N(6)-[(R)-lipoyl]-L-lysyl-[glycine-cleavage complex H protein] + glycine + H(+) = N(6)-[(R)-S(8)-aminomethyldihydrolipoyl]-L-lysyl-[glycine-cleavage complex H protein] + CO2. Functionally, the glycine cleavage system catalyzes the degradation of glycine. The P protein binds the alpha-amino group of glycine through its pyridoxal phosphate cofactor; CO(2) is released and the remaining methylamine moiety is then transferred to the lipoamide cofactor of the H protein. The protein is Probable glycine dehydrogenase (decarboxylating) subunit 2 of Chlorobaculum tepidum (strain ATCC 49652 / DSM 12025 / NBRC 103806 / TLS) (Chlorobium tepidum).